The chain runs to 450 residues: Probable cysteine desulfurase, mitochondrial (450 aa).

The N-terminal 52 residues, 1–52 (MNRSILKFVKNGIISSSSRINNNGFINKNNNNRWFATLPQPNRGIAGEKQPI), are a transit peptide targeting the mitochondrion. Residues 120–121 (AT), asparagine 200, glutamine 228, and 248–250 (SGH) each bind pyridoxal 5'-phosphate. At lysine 251 the chain carries N6-(pyridoxal phosphate)lysine. Threonine 288 provides a ligand contact to pyridoxal 5'-phosphate. Cysteine 374 functions as the Cysteine persulfide intermediate in the catalytic mechanism. Position 374 (cysteine 374) interacts with [2Fe-2S] cluster.

It belongs to the class-V pyridoxal-phosphate-dependent aminotransferase family. NifS/IscS subfamily. Pyridoxal 5'-phosphate is required as a cofactor.

The protein localises to the mitochondrion. The protein resides in the nucleus. The catalysed reaction is (sulfur carrier)-H + L-cysteine = (sulfur carrier)-SH + L-alanine. Catalyzes the removal of elemental sulfur from cysteine to produce alanine. It supplies the inorganic sulfur for iron-sulfur (Fe-S) clusters. This Dictyostelium discoideum (Social amoeba) protein is Probable cysteine desulfurase, mitochondrial (nfs1).